The sequence spans 356 residues: Neutral protease 2 homolog UREG_03761 (356 aa).

Residues 1 to 19 form the signal peptide; it reads MRFSSSFLSVLALASQALA. A propeptide spanning residues 20 to 181 is cleaved from the precursor; sequence FPLNDLPTTD…ALPEATLDKR (162 aa). 2 disulfide bridges follow: Cys189–Cys259 and Cys266–Cys284. His308 is a binding site for Zn(2+). Glu309 is a catalytic residue. Zn(2+)-binding residues include His312 and Asp323.

The protein belongs to the peptidase M35 family. Requires Zn(2+) as cofactor.

The protein localises to the secreted. The catalysed reaction is Preferential cleavage of bonds with hydrophobic residues in P1'. Also 3-Asn-|-Gln-4 and 8-Gly-|-Ser-9 bonds in insulin B chain.. In terms of biological role, secreted metalloproteinase that allows assimilation of proteinaceous substrates. Shows high activities on basic nuclear substrates such as histone and protamine. In Uncinocarpus reesii (strain UAMH 1704), this protein is Neutral protease 2 homolog UREG_03761.